We begin with the raw amino-acid sequence, 507 residues long: Probable cytosol aminopeptidase (507 aa).

Mn(2+) is bound by residues Lys-275 and Asp-280. The active site involves Lys-287. Asp-298, Asp-357, and Glu-359 together coordinate Mn(2+). Residue Arg-361 is part of the active site.

The protein belongs to the peptidase M17 family. Mn(2+) is required as a cofactor.

The protein localises to the cytoplasm. It carries out the reaction Release of an N-terminal amino acid, Xaa-|-Yaa-, in which Xaa is preferably Leu, but may be other amino acids including Pro although not Arg or Lys, and Yaa may be Pro. Amino acid amides and methyl esters are also readily hydrolyzed, but rates on arylamides are exceedingly low.. The enzyme catalyses Release of an N-terminal amino acid, preferentially leucine, but not glutamic or aspartic acids.. In terms of biological role, presumably involved in the processing and regular turnover of intracellular proteins. Catalyzes the removal of unsubstituted N-terminal amino acids from various peptides. The chain is Probable cytosol aminopeptidase from Rhodopirellula baltica (strain DSM 10527 / NCIMB 13988 / SH1).